We begin with the raw amino-acid sequence, 285 residues long: K88 fimbrial protein AD (285 aa).

An N-terminal signal peptide occupies residues 1–21; that stretch reads MKKTLIALAIAASAASGMAHA.

The protein belongs to the fimbrial K88 protein family. As to quaternary structure, K88 fimbria, 0.1-1 micrometer in length and 7 nanometers in diameter, is composed of about 100 identical subunits.

The protein resides in the fimbrium. Its function is as follows. K88 major fimbrial subunit. Fimbriae (also called pili), are polar filaments radiating from the surface of the bacterium to a length of 0.5-1.5 micrometers and numbering 100-300 per cell. They enable bacteria to colonize the epithelium of specific host organs. This chain is K88 fimbrial protein AD (faeG), found in Escherichia coli.